Here is a 502-residue protein sequence, read N- to C-terminus: ATP synthase subunit alpha, sodium ion specific (502 aa).

169–176 lines the ATP pocket; it reads GDRQTGKT.

This sequence belongs to the ATPase alpha/beta chains family. F-type ATPases have 2 components, CF(1) - the catalytic core - and CF(0) - the membrane proton channel. CF(1) has five subunits: alpha(3), beta(3), gamma(1), delta(1), epsilon(1). CF(0) has three main subunits: a, b and c.

The protein localises to the cell membrane. It catalyses the reaction 4 Na(+)(in) + ATP + H2O = 4 Na(+)(out) + ADP + phosphate + H(+). With respect to regulation, inhibited by nitrate. Its function is as follows. Produces ATP from ADP in the presence of a sodium ion gradient across the membrane. The alpha chain is a regulatory subunit. This chain is ATP synthase subunit alpha, sodium ion specific, found in Acetobacterium woodii (strain ATCC 29683 / DSM 1030 / JCM 2381 / KCTC 1655 / WB1).